The primary structure comprises 418 residues: MKLKSDFLGLLYSRGYFNQCTDLAELDQLMSKECVIAYIGFDCTARSLHIGSLMQIMILRYLQKCGHKPIVLLGNGTTKIGDPSGKDKSRTLLSSSDIQENTLGIRKVLEKFIVCGGGVSDALLVYNAEWLDKLNYIDFLRNIGRHFSVNNMLTFDSVKLRLEREQNLSFLEFNYMLLQAYDFIELNQRYNCLLQIGGSDQWGNIVNGVELGRKLKLPQLFGLTTHLLLTSTGEKMGKTADGAIWLDGEMYSPADYWQYFRNVKDEDVGRFLRLFTELPLTEIEKLENLKGYEINEAKKILATEATRICHGEKIAQDIAYDALKVFECNDHSGLPVFYVCKSEIELGLSVVKLLQVSGMEKSNSSAKRLINDKGCKINDIIILDVNYKLSLQDFCGMSYIKLSCGKKRHLKVVLESDL.

L-tyrosine is bound at residue tyrosine 38. Residues 43 to 52 (CTARSLHIGS) carry the 'HIGH' region motif. The L-tyrosine site is built by tyrosine 175 and glutamine 179. The 'KMSKS' region signature appears at 235-239 (KMGKT). Position 238 (lysine 238) interacts with ATP. Residues 348–413 (LSVVKLLQVS…CGKKRHLKVV (66 aa)) form the S4 RNA-binding domain.

This sequence belongs to the class-I aminoacyl-tRNA synthetase family. TyrS type 1 subfamily. As to quaternary structure, homodimer.

The protein resides in the cytoplasm. The catalysed reaction is tRNA(Tyr) + L-tyrosine + ATP = L-tyrosyl-tRNA(Tyr) + AMP + diphosphate + H(+). Catalyzes the attachment of tyrosine to tRNA(Tyr) in a two-step reaction: tyrosine is first activated by ATP to form Tyr-AMP and then transferred to the acceptor end of tRNA(Tyr). The protein is Tyrosine--tRNA ligase of Ehrlichia ruminantium (strain Welgevonden).